A 232-amino-acid polypeptide reads, in one-letter code: Orotidine 5'-phosphate decarboxylase (232 aa).

Residues aspartate 11, lysine 32, 59–68, threonine 116, arginine 178, glutamine 188, glycine 208, and arginine 209 each bind substrate; that span reads DLKLHDIPHT. Lysine 61 acts as the Proton donor in catalysis.

This sequence belongs to the OMP decarboxylase family. Type 1 subfamily. As to quaternary structure, homodimer.

It catalyses the reaction orotidine 5'-phosphate + H(+) = UMP + CO2. Its pathway is pyrimidine metabolism; UMP biosynthesis via de novo pathway; UMP from orotate: step 2/2. In terms of biological role, catalyzes the decarboxylation of orotidine 5'-monophosphate (OMP) to uridine 5'-monophosphate (UMP). The sequence is that of Orotidine 5'-phosphate decarboxylase from Synechococcus sp. (strain JA-3-3Ab) (Cyanobacteria bacterium Yellowstone A-Prime).